A 208-amino-acid chain; its full sequence is Small ribosomal subunit protein uS4 (208 aa).

Residues 98-159 (RRLDNVAYRL…KSRKVAAISE (62 aa)) form the S4 RNA-binding domain.

Belongs to the universal ribosomal protein uS4 family. Part of the 30S ribosomal subunit. Contacts protein S5. The interaction surface between S4 and S5 is involved in control of translational fidelity.

Its function is as follows. One of the primary rRNA binding proteins, it binds directly to 16S rRNA where it nucleates assembly of the body of the 30S subunit. Functionally, with S5 and S12 plays an important role in translational accuracy. The chain is Small ribosomal subunit protein uS4 from Citrifermentans bemidjiense (strain ATCC BAA-1014 / DSM 16622 / JCM 12645 / Bem) (Geobacter bemidjiensis).